The chain runs to 143 residues: MIIPDINLLLYAVITGFPQHRRAHAWWQDTVNGHTRIGLTYPALFGFLRIATSARVLAAPLPTADAIAYVREWLSQPNVDLLTAGPRHLDIALGLLDKLGTASHLTTDVQLAAYGIEYDAEIHSSDTDFARFADLKWTDPLRE.

Residues Asp5 and Asp108 each coordinate Mg(2+).

This sequence belongs to the PINc/VapC protein family. Mg(2+) is required as a cofactor.

Functionally, toxic component of a type II toxin-antitoxin (TA) system. An RNase. Its toxic effect is neutralized by coexpression with cognate antitoxin VapB33. The chain is Ribonuclease VapC33 from Mycobacterium tuberculosis (strain CDC 1551 / Oshkosh).